A 183-amino-acid polypeptide reads, in one-letter code: Dual-action ribosomal maturation protein DarP (183 aa).

The protein belongs to the DarP family.

The protein resides in the cytoplasm. Functionally, member of a network of 50S ribosomal subunit biogenesis factors which assembles along the 30S-50S interface, preventing incorrect 23S rRNA structures from forming. Promotes peptidyl transferase center (PTC) maturation. This is Dual-action ribosomal maturation protein DarP from Citrobacter koseri (strain ATCC BAA-895 / CDC 4225-83 / SGSC4696).